We begin with the raw amino-acid sequence, 612 residues long: MPEYRSKTSTHGRNMAGARALWRATGMRDGDFHKPIIAIANSFTQFVPGHVHLKDLGQLVAREIERVGGVAKEFDTIAVDDGIAMGHDGMLYSLPSREIIADSVEYMVNAHCADALVCISNCDKITPGMLMAALRLNIPTVFVSGGPMEAGKTKLAEHKLDLIDAMVIAADDSASDEKVAEFERSACPTCGSCSGMFTANSMNCLTEALGLSLPGNGTVVATHADREQLFLRAGRVAVELCHRWYGGEDPTALPRGIATFEAFENAMTLDIAMGGSTNTILHLLAAAQEGEVAFGMQDIDRLSKRVPQLCKVAPNTPKYHIEDVHRAGGIMAILGELARGGLLHTNAATVHARTLADAIAQWDVTQTDDENVHTFYKAGPAGIPTQIAFSQATRWDSLDTDRSDGCIRDVAHAFSQEGGLAVLYGNIARDGCVVKTAGVDESIHVFEGTARVFESQDAAVKGILADEVVAGDVVVIRYEGPKGGPGMQEMLYPTSYLKSKGLGKQCALLTDGRFSGGTSGLSIGHASPEAAAGGAIGLVREGDRILIDIPNRSINLLISDEELALRRAEQDAKGWKPVEVRPRKVTTALKAYALLATSADKGAVRDKALLDG.

Residue D81 participates in Mg(2+) binding. C122 provides a ligand contact to [2Fe-2S] cluster. Residues D123 and K124 each coordinate Mg(2+). N6-carboxylysine is present on K124. C193 is a binding site for [2Fe-2S] cluster. E489 contributes to the Mg(2+) binding site. S515 acts as the Proton acceptor in catalysis.

It belongs to the IlvD/Edd family. Homodimer. [2Fe-2S] cluster is required as a cofactor. Requires Mg(2+) as cofactor.

The enzyme catalyses (2R)-2,3-dihydroxy-3-methylbutanoate = 3-methyl-2-oxobutanoate + H2O. It catalyses the reaction (2R,3R)-2,3-dihydroxy-3-methylpentanoate = (S)-3-methyl-2-oxopentanoate + H2O. It functions in the pathway amino-acid biosynthesis; L-isoleucine biosynthesis; L-isoleucine from 2-oxobutanoate: step 3/4. Its pathway is amino-acid biosynthesis; L-valine biosynthesis; L-valine from pyruvate: step 3/4. Its function is as follows. Functions in the biosynthesis of branched-chain amino acids. Catalyzes the dehydration of (2R,3R)-2,3-dihydroxy-3-methylpentanoate (2,3-dihydroxy-3-methylvalerate) into 2-oxo-3-methylpentanoate (2-oxo-3-methylvalerate) and of (2R)-2,3-dihydroxy-3-methylbutanoate (2,3-dihydroxyisovalerate) into 2-oxo-3-methylbutanoate (2-oxoisovalerate), the penultimate precursor to L-isoleucine and L-valine, respectively. The protein is Dihydroxy-acid dehydratase of Xanthomonas axonopodis pv. citri (strain 306).